A 691-amino-acid chain; its full sequence is Protein simr-1 (691 aa).

In terms of domain architecture, Tudor; degenerate spans 139-204; it reads EAEITPGTIY…TLFHLGKFTI (66 aa). 2 disordered regions span residues 547–573 and 588–618; these read TGPC…DMSI and DNLN…TTNS. Polar residues-rich tracts occupy residues 549–573 and 588–598; these read PCGS…DMSI and DNLNDTENWPN.

The protein resides in the cytoplasm. It is found in the perinuclear region. Functionally, acts downstream of piRNA production to promote mediator complex-dependent endogenous siRNA biogenesis from piRNA-target mRNAs in the RNA interference pathway in germ cells. Not required to identify target mRNA by the piRNA pathway. Plays a role in both spermatogenesis and oogenesis and in maintaining fertility over multiple generations, probably by directing mutator-dependent silencing to piRNA-targeted genes. The polypeptide is Protein simr-1 (Caenorhabditis elegans).